Here is a 200-residue protein sequence, read N- to C-terminus: Late protein I196L (200 aa).

Tandem repeats lie at residues 28 to 48 (SNSL…PTTS) and 49 to 69 (SNSL…PTTS). The stretch at 70–91 (SNYLTSAISTNISDKEEDTPFS) is one 3; approximate repeat.

It belongs to the asfivirus I196L family.

The sequence is that of Late protein I196L from African swine fever virus (isolate Tick/South Africa/Pretoriuskop Pr4/1996) (ASFV).